The following is a 147-amino-acid chain: D-aminoacyl-tRNA deacylase (147 aa).

Positions 137-138 match the Gly-cisPro motif, important for rejection of L-amino acids motif; it reads GP.

This sequence belongs to the DTD family. Homodimer.

Its subcellular location is the cytoplasm. The enzyme catalyses glycyl-tRNA(Ala) + H2O = tRNA(Ala) + glycine + H(+). The catalysed reaction is a D-aminoacyl-tRNA + H2O = a tRNA + a D-alpha-amino acid + H(+). An aminoacyl-tRNA editing enzyme that deacylates mischarged D-aminoacyl-tRNAs. Also deacylates mischarged glycyl-tRNA(Ala), protecting cells against glycine mischarging by AlaRS. Acts via tRNA-based rather than protein-based catalysis; rejects L-amino acids rather than detecting D-amino acids in the active site. By recycling D-aminoacyl-tRNA to D-amino acids and free tRNA molecules, this enzyme counteracts the toxicity associated with the formation of D-aminoacyl-tRNA entities in vivo and helps enforce protein L-homochirality. This Acinetobacter baumannii (strain ACICU) protein is D-aminoacyl-tRNA deacylase.